Consider the following 1029-residue polypeptide: Kinesin-like protein KIF17 (1029 aa).

The Kinesin motor domain maps to 5-335; sequence AVKVVVRCRP…LRYANRAKNI (331 aa). Residue 91-98 participates in ATP binding; that stretch reads GQTGSGKS. Residues 346–462 adopt a coiled-coil conformation; it reads KDALLREYQE…EENLRKETEA (117 aa). Disordered regions lie at residues 523-569 and 647-673; these read ELPK…MPTE and VPAP…PPRP. The segment covering 532 to 551 has biased composition (low complexity); that stretch reads SEISLGSSESSSLEETSVSE. Over residues 657 to 673 the composition is skewed to basic and acidic residues; the sequence is SDARPEAEAADDFPPRP. Residues 739–846 adopt a coiled-coil conformation; that stretch reads QQVLARLQLL…QLEKIDYLAT (108 aa). Disordered regions lie at residues 908 to 931 and 968 to 1029; these read AVST…EPNM and KSLT…SEPL.

It belongs to the TRAFAC class myosin-kinesin ATPase superfamily. Kinesin family. Homodimer. Interacts with APBA1 (via PDZ domain); the interaction is direct and is required for association of KIF17 with the cargo that is to be transported. Interacts with IFT B complex components IFT52 and IFT57. Interacts with IFT70B. Interacts with PIWIL1. Interacts with TBATA.

The protein resides in the cytoplasm. Its subcellular location is the cytoskeleton. The protein localises to the cell projection. It is found in the cilium. It localises to the dendrite. Its function is as follows. Dendrite-specific motor protein which, in association with the Apba1-containing complex (LIN-10-LIN-2-LIN-7 complex), transports vesicles containing N-methyl-D-aspartate (NMDA) receptor subunit NR2B along microtubules. In Homo sapiens (Human), this protein is Kinesin-like protein KIF17 (KIF17).